Reading from the N-terminus, the 521-residue chain is Ankyrin repeat and death domain-containing protein 1B (521 aa).

10 ANK repeats span residues 60–89 (AIER…NINA), 93–122 (MNRT…RVDV), 126–155 (HGLT…DQRA), 159–190 (EGMN…DLNQ), 194–223 (RGRK…HTSE), 227–256 (DGNT…EVNE), 260–289 (LNVS…DLQQ), 293–322 (SKEP…DVDV), 326–355 (RRQT…NLKI), and 359–388 (QGKT…YYAW). Residues 420-508 (TLLWNLAYRQ…ELAEKIRQFK (89 aa)) form the Death domain.

This chain is Ankyrin repeat and death domain-containing protein 1B (Ankdd1b), found in Mus musculus (Mouse).